A 300-amino-acid chain; its full sequence is Sulfate adenylyltransferase subunit 2 (300 aa).

A disordered region spans residues 281-300 (RAIDRDEAGSMEKKKREGYF).

This sequence belongs to the PAPS reductase family. CysD subfamily. In terms of assembly, heterodimer composed of CysD, the smaller subunit, and CysN.

The enzyme catalyses sulfate + ATP + H(+) = adenosine 5'-phosphosulfate + diphosphate. It participates in sulfur metabolism; hydrogen sulfide biosynthesis; sulfite from sulfate: step 1/3. In terms of biological role, with CysN forms the ATP sulfurylase (ATPS) that catalyzes the adenylation of sulfate producing adenosine 5'-phosphosulfate (APS) and diphosphate, the first enzymatic step in sulfur assimilation pathway. APS synthesis involves the formation of a high-energy phosphoric-sulfuric acid anhydride bond driven by GTP hydrolysis by CysN coupled to ATP hydrolysis by CysD. The protein is Sulfate adenylyltransferase subunit 2 of Brucella abortus (strain 2308).